Reading from the N-terminus, the 684-residue chain is Frizzled-8 (684 aa).

The signal sequence occupies residues 1–27; that stretch reads MEWGYLLEVTSLLAALAVLQRSSGAAA. The Extracellular portion of the chain corresponds to 28 to 271; sequence ASAKELACQE…NPFFSQDERA (244 aa). Positions 30–151 constitute an FZ domain; the sequence is AKELACQEIT…GNPDTLCMDY (122 aa). 5 disulfide bridges follow: cysteine 35/cysteine 96, cysteine 43/cysteine 89, cysteine 80/cysteine 118, cysteine 107/cysteine 148, and cysteine 111/cysteine 135. Asparagine 49 carries an N-linked (GlcNAc...) asparagine glycan. A hexadecanoate-binding site is contributed by 71 to 78; the sequence is QFWPLVEI. Positions 95–100 are wnt-binding; that stretch reads ICLEDY. A wnt-binding region spans residues 147 to 152; it reads LCMDYN. Asparagine 152 carries an N-linked (GlcNAc...) asparagine glycan. Residues 155–222 are disordered; it reads DLTTAAPSPP…KARPPGGGAA (68 aa). Over residues 161–175 the composition is skewed to pro residues; sequence PSPPRRLPPPQPGEQ. Composition is skewed to low complexity over residues 176–186 and 199–222; these read PPSGSGHSRPP and GSGD…GGAA. Residues 272–292 traverse the membrane as a helical segment; the sequence is FTVFWIGLWSVLCFVSTFATV. Residues 293–308 lie on the Cytoplasmic side of the membrane; it reads STFLIDMERFKYPERP. A helical transmembrane segment spans residues 309–329; that stretch reads IIFLSACYLFVSVGYLVRLVA. The Extracellular segment spans residues 330–393; the sequence is GHEKVACSGG…RYETTGPALC (64 aa). A helical membrane pass occupies residues 394–414; that stretch reads TVVFLLVYFFGMASSIWWVIL. Residues 415-436 lie on the Cytoplasmic side of the membrane; that stretch reads SLTWFLAAGMKWGNEAIAGYSQ. Residues 437 to 457 traverse the membrane as a helical segment; it reads YFHLAAWLVPSVKSIAVLALS. Residues 458–480 are Extracellular-facing; the sequence is SVDGDPVAGICYVGNQSLDNLRG. N-linked (GlcNAc...) asparagine glycosylation is present at asparagine 472. A helical transmembrane segment spans residues 481–501; sequence FVLAPLVIYLFIGTMFLLAGF. Topologically, residues 502-529 are cytoplasmic; sequence VSLFRIRSVIKQQGGPTKTHKLEKLMIR. The helical transmembrane segment at 530–550 threads the bilayer; the sequence is LGLFTVLYTVPAAVVVACLFY. Residues 551–581 are Extracellular-facing; the sequence is EQHNRPRWEATHNCPCLRDLQPDQARRPDYA. A helical transmembrane segment spans residues 582–602; that stretch reads VFMLKYFMCLVVGITSGVWVW. Topologically, residues 603–684 are cytoplasmic; it reads SGKTLESWRA…YPKQMPLSQV (82 aa). The Lys-Thr-X-X-X-Trp motif, mediates interaction with the PDZ domain of Dvl family members motif lies at 605-610; that stretch reads KTLESW. Residues 630–654 are compositionally biased toward gly residues; that stretch reads AGGSGPGGGGPGPGGGGGHGGGGGS. The interval 630–655 is disordered; the sequence is AGGSGPGGGGPGPGGGGGHGGGGGSL. The PDZ-binding motif lies at 682–684; the sequence is SQV.

This sequence belongs to the G-protein coupled receptor Fz/Smo family. Component of a Wnt-signaling complex that contains a WNT protein, a FZD protein and LRP5 or LRP6. Interacts directly with LRP5 or LRP6; the interaction is promoted by Wnt-binding and signaling and inhibited by DKK1. Interacts (via the PDZ-binding motif) with GPOC (via its PDZ domain). Interacts with RSPO1 and RSPO3. Interacts with glypican GPC3. Post-translationally, ubiquitinated by ZNRF3, leading to its degradation by the proteasome.

The protein localises to the membrane. Its subcellular location is the golgi apparatus. It is found in the cell membrane. Receptor for Wnt proteins. Component of the Wnt-Fzd-LRP5-LRP6 complex that triggers beta-catenin signaling through inducing aggregation of receptor-ligand complexes into ribosome-sized signalosomes. The beta-catenin canonical signaling pathway leads to the activation of disheveled proteins, inhibition of GSK-3 kinase, nuclear accumulation of beta-catenin and activation of Wnt target genes. A second signaling pathway involving PKC and calcium fluxes has been seen for some family members, but it is not yet clear if it represents a distinct pathway or if it can be integrated in the canonical pathway, as PKC seems to be required for Wnt-mediated inactivation of GSK-3 kinase. Both pathways seem to involve interactions with G-proteins. May be involved in transduction and intercellular transmission of polarity information during tissue morphogenesis and/or in differentiated tissues. Coreceptor along with RYK of Wnt proteins, such as WNT1. The polypeptide is Frizzled-8 (Fzd8) (Rattus norvegicus (Rat)).